We begin with the raw amino-acid sequence, 373 residues long: Probable di-N-acetylchitobiase 1 (373 aa).

Positions 1–20 are cleaved as a signal peptide; the sequence is MKIFIIISLILTILIIQSKS. The region spanning 21–369 is the GH18 domain; sequence KECPCSNVEL…SGMWGALNSF (349 aa). Asn48 carries an N-linked (GlcNAc...) asparagine glycan. Residues 53–54 and 82–85 each bind chitin; these read PY and NGVR. Asn99 carries N-linked (GlcNAc...) asparagine glycosylation. Glu127 serves as the catalytic Proton donor. Chitin is bound by residues Tyr128 and 191 to 194; that span reads MDYD. 5 N-linked (GlcNAc...) asparagine glycosylation sites follow: Asn222, Asn250, Asn269, Asn279, and Asn288. Trp347 is a binding site for chitin.

The protein belongs to the glycosyl hydrolase 18 family.

Its subcellular location is the lysosome. Functionally, involved in the degradation of asparagine-linked glycoproteins. May hydrolyze of N-acetyl-beta-D-glucosamine (1-4)N-acetylglucosamine chitobiose core from the reducing end of the bond. The polypeptide is Probable di-N-acetylchitobiase 1 (ctbs1) (Dictyostelium discoideum (Social amoeba)).